The following is a 372-amino-acid chain: Steroid C26-monooxygenase (372 aa).

Residue cysteine 314 coordinates heme.

The protein belongs to the cytochrome P450 family. Requires heme as cofactor.

The enzyme catalyses cholest-4-en-3-one + 6 reduced [2Fe-2S]-[ferredoxin] + 3 O2 + 5 H(+) = (25R)-3-oxocholest-4-en-26-oate + 6 oxidized [2Fe-2S]-[ferredoxin] + 4 H2O. The protein operates within steroid metabolism; cholesterol degradation. Involved in the utilization of cholesterol as the sole carbon and energy source by degrading the side chain during infection. Primarily catalyzes the sequential oxidation of the terminal methyl of cholest-4-en-3-one into (25R)-26-hydroxycholest-4-en-3-one (alcohol), (25R)-26-oxocholest-4-en-3-one (aldehyde), to finally yield the carboxylic acid (25R)-3-oxocholest-4-en-26-oate. Also able to sequentially oxidize cholesterol itself, not only cholest-4-en-3-one. The sequence is that of Steroid C26-monooxygenase (cyp142) from Mycobacterium tuberculosis (strain CDC 1551 / Oshkosh).